The primary structure comprises 299 residues: Acetylglutamate kinase (299 aa).

Substrate contacts are provided by residues 72–73 (GG), R94, and N196.

This sequence belongs to the acetylglutamate kinase family. ArgB subfamily.

Its subcellular location is the cytoplasm. It catalyses the reaction N-acetyl-L-glutamate + ATP = N-acetyl-L-glutamyl 5-phosphate + ADP. It functions in the pathway amino-acid biosynthesis; L-arginine biosynthesis; N(2)-acetyl-L-ornithine from L-glutamate: step 2/4. Functionally, catalyzes the ATP-dependent phosphorylation of N-acetyl-L-glutamate. The chain is Acetylglutamate kinase from Paraburkholderia phymatum (strain DSM 17167 / CIP 108236 / LMG 21445 / STM815) (Burkholderia phymatum).